The chain runs to 655 residues: Polycyclic ketone monooxygenase (655 aa).

Residues G89, D113, A114, T121, W124, C132, D133, Y139, and V183 each contribute to the FAD site. Residues T277, T280, T301, K425, and V452 each contribute to the NADPH site. C424 and C596 form a disulfide bridge. FAD contacts are provided by T492 and N541. Y600 lines the NADPH pocket.

The protein belongs to the FAD-binding monooxygenase family. FAD is required as a cofactor.

Its function is as follows. Polycyclic ketone monooxygenase (PockeMO) that displays excellent enantioselectivity, acts on various ketones, and is particularly active on polycyclic molecules. Breaks C-C bonds through the insertion of a single oxygen atom adjacent to a carbonyl moiety, yielding esters or lactones from ketones. PockeMO is able to convert linear ketones (including cyclohexane and to a lesser extend 4-octanone), cyclic ketones (including cyclohexanone and cyclooctanone), bicyclic ketones and polycyclic ketones (steroids). Performs oxidation of the keto functionalities at both the A and D rings of steroids. Particularly, oxidizes the A ring of stanolone or pregnenolone. Selectively oxidizes the D ring of androstenedione or androstadienedione, steroids with keto groups in both the A and D rings, to yield the pharmaceutically relevant testo(lo)lactone. The protein is Polycyclic ketone monooxygenase of Thermothelomyces thermophilus (strain ATCC 42464 / BCRC 31852 / DSM 1799) (Sporotrichum thermophile).